We begin with the raw amino-acid sequence, 402 residues long: Probable sugar efflux transporter (402 aa).

Helical transmembrane passes span 15–35, 51–71, 84–104, 109–129, 137–157, 168–188, 209–229, 245–265, 276–296, 297–317, 333–353, and 365–385; these read VLIMACAGFIFNTTEFVPVAM, GLMMTVYAWTVLIMSLPAMLA, LFIIFIVGHILLVIAWNFWIL, MCIALAHSVFWSITASLVMRI, QALGMLAIGTALATILGLPIG, VTFGIIAVLALSIMFLIIRLL, PLLLWLYVTTAIVISAHFTAY, NFATAVLLVFGFSGIAASLLF, FIVVSMSLLMFSLLLLLFSTE, AIIAMFSLVFIWGIGISCIGL, VATAIYSGIFNAGIGAGALFG, and IGYTGAALGLIGFIIFITTHL.

The protein belongs to the major facilitator superfamily. SotB (TC 2.A.1.2) family.

The protein localises to the cell inner membrane. Functionally, involved in the efflux of sugars. The physiological role may be the reduction of the intracellular concentration of toxic sugars or sugar metabolites. This Haemophilus influenzae (strain 86-028NP) protein is Probable sugar efflux transporter.